Consider the following 291-residue polypeptide: MTTLAIDIGGTKLAAALIGADGQIRDRRELPTPASQTPEALRDALSALVSPLQAHAQRVAIASTGIIRDGSLLALNPHNLGGLLHFPLVKTLEQLTNLPTIAINDAQAAAWAEYQALEGDITDMVFITVSTGVGGGVVSGGKLLTGPGGLAGHIGHTLADPHGPVCGCGRTGCVEAIASGRGIAAAAQGELAGADARTIFTRAGQGDEQAQQLIHLSARTLARLIADIKATTDCQCVVVGGSVGLAEGYLALVEMYLAQEPAAFHVDLLAAHYRHDAGLLGAALLAQGEKL.

ATP contacts are provided by residues 5 to 12 (AIDIGGTK) and 132 to 139 (GVGGGVVS). His156, Cys166, Cys168, and Cys173 together coordinate Zn(2+).

This sequence belongs to the ROK (NagC/XylR) family. NanK subfamily. As to quaternary structure, homodimer.

The catalysed reaction is an N-acyl-D-mannosamine + ATP = an N-acyl-D-mannosamine 6-phosphate + ADP + H(+). Its pathway is amino-sugar metabolism; N-acetylneuraminate degradation; D-fructose 6-phosphate from N-acetylneuraminate: step 2/5. In terms of biological role, catalyzes the phosphorylation of N-acetylmannosamine (ManNAc) to ManNAc-6-P. This chain is N-acetylmannosamine kinase, found in Escherichia coli (strain 55989 / EAEC).